A 103-amino-acid chain; its full sequence is Signal recognition particle 19 kDa protein (103 aa).

This sequence belongs to the SRP19 family. As to quaternary structure, part of the signal recognition particle protein translocation system, which is composed of SRP and FtsY. Archaeal SRP consists of a 7S RNA molecule of 300 nucleotides and two protein subunits: SRP54 and SRP19.

The protein resides in the cytoplasm. Involved in targeting and insertion of nascent membrane proteins into the cytoplasmic membrane. Binds directly to 7S RNA and mediates binding of the 54 kDa subunit of the SRP. The protein is Signal recognition particle 19 kDa protein of Methanopyrus kandleri (strain AV19 / DSM 6324 / JCM 9639 / NBRC 100938).